Consider the following 142-residue polypeptide: Large ribosomal subunit protein uL13 (142 aa).

The protein belongs to the universal ribosomal protein uL13 family. As to quaternary structure, part of the 50S ribosomal subunit.

In terms of biological role, this protein is one of the early assembly proteins of the 50S ribosomal subunit, although it is not seen to bind rRNA by itself. It is important during the early stages of 50S assembly. The polypeptide is Large ribosomal subunit protein uL13 (Pectobacterium carotovorum subsp. carotovorum (strain PC1)).